Here is a 498-residue protein sequence, read N- to C-terminus: ATP synthase subunit beta, chloroplastic (498 aa).

172–179 serves as a coordination point for ATP; it reads GGAGVGKT.

It belongs to the ATPase alpha/beta chains family. As to quaternary structure, F-type ATPases have 2 components, CF(1) - the catalytic core - and CF(0) - the membrane proton channel. CF(1) has five subunits: alpha(3), beta(3), gamma(1), delta(1), epsilon(1). CF(0) has four main subunits: a(1), b(1), b'(1) and c(9-12).

It localises to the plastid. It is found in the chloroplast thylakoid membrane. It carries out the reaction ATP + H2O + 4 H(+)(in) = ADP + phosphate + 5 H(+)(out). Produces ATP from ADP in the presence of a proton gradient across the membrane. The catalytic sites are hosted primarily by the beta subunits. The polypeptide is ATP synthase subunit beta, chloroplastic (Magnolia tripetala (Umbrella-tree)).